Here is a 269-residue protein sequence, read N- to C-terminus: MVMDSSKWWWIGNHNTTNFSPWLHSTLSELDEKTKEMLRVIDEDADSFAARAEMYYKKRPELIAMVEEFYRSHRSLAERYDLLRPSSVHKHGSDSESHEKSSTCDESSWSEACETHEEYAESEIDNGESKWVDESEIDGIVEEIEPSEVVYSEGNGNSEMMKIEIERLREENKVYSEMVREKDEEKREAIRQMSVAIQMLKEENSELKKRVTNTVVARRNKEGGDSQRKQQMWKPFEFKKIKLEGLWGKGFGNWALPNTDSTSKELMTL.

The NAB domain occupies 6-87 (SKWWWIGNHN…ERYDLLRPSS (82 aa)). A disordered region spans residues 87-113 (SVHKHGSDSESHEKSSTCDESSWSEAC). Over residues 91-103 (HGSDSESHEKSST) the composition is skewed to basic and acidic residues. Positions 155–214 (NGNSEMMKIEIERLREENKVYSEMVREKDEEKREAIRQMSVAIQMLKEENSELKKRVTNT) form a coiled coil.

The protein belongs to the NET family.

The protein resides in the cytoplasm. Its subcellular location is the cytoskeleton. It is found in the nucleus membrane. Functionally, plant-specific actin binding protein. May be part of a membrane-cytoskeletal adapter complex. In Arabidopsis thaliana (Mouse-ear cress), this protein is Protein NETWORKED 3A.